The chain runs to 426 residues: Putative phosphate permease TC_0064 (426 aa).

The next 11 helical transmembrane spans lie at Met-1–Ala-21, Leu-37–Leu-57, Val-83–Phe-103, Gly-104–Leu-124, Val-140–Ile-160, Ala-183–Val-203, Val-207–Val-227, Leu-260–Ala-280, Val-309–Gly-329, Phe-365–Ala-385, and Ile-399–Leu-419.

This sequence belongs to the inorganic phosphate transporter (PiT) (TC 2.A.20) family.

The protein resides in the cell membrane. Its function is as follows. Potential transporter for phosphate. This chain is Putative phosphate permease TC_0064, found in Chlamydia muridarum (strain MoPn / Nigg).